Reading from the N-terminus, the 579-residue chain is Protein disulfide isomerase-like 1-3 (579 aa).

A signal peptide spans 1 to 25 (MASSSTSISLLLFVSFILLLVNSRA). Asn-27 carries an N-linked (GlcNAc...) asparagine glycan. Composition is skewed to basic and acidic residues over residues 44-69 (EESKEQSHGGGSYHEEEHDHQHRDFE) and 80-89 (EFHHGDHGYE). The tract at residues 44–91 (EESKEQSHGGGSYHEEEHDHQHRDFENYDDLEQGGGEFHHGDHGYEEE) is disordered. The Thioredoxin 1 domain maps to 81 to 204 (FHHGDHGYEE…IVTWLKKKAS (124 aa)). Residues Asn-108 and Asn-115 are each glycosylated (N-linked (GlcNAc...) asparagine). Residues Cys-128 and Cys-131 each act as nucleophile in the active site. An intrachain disulfide couples Cys-128 to Cys-131. Asn-209, Asn-293, Asn-313, and Asn-338 each carry an N-linked (GlcNAc...) asparagine glycan. The Thioredoxin 2 domain occupies 416–546 (DFLADKLKPF…LYKFLKKHAS (131 aa)). Active-site nucleophile residues include Cys-467 and Cys-470. A disulfide bond links Cys-467 and Cys-470. An N-linked (GlcNAc...) asparagine glycan is attached at Asn-520. Residues 558–579 (EPVISTMKSDEKIEGDSSKDEL) are disordered. The segment covering 565–579 (KSDEKIEGDSSKDEL) has biased composition (basic and acidic residues). A Prevents secretion from ER motif is present at residues 576-579 (KDEL).

Belongs to the protein disulfide isomerase family. Widely expressed.

The protein resides in the endoplasmic reticulum lumen. The enzyme catalyses Catalyzes the rearrangement of -S-S- bonds in proteins.. Acts as a protein-folding catalyst that interacts with nascent polypeptides to catalyze the formation, isomerization, and reduction or oxidation of disulfide bonds. The polypeptide is Protein disulfide isomerase-like 1-3 (PDIL1-3) (Arabidopsis thaliana (Mouse-ear cress)).